Here is a 475-residue protein sequence, read N- to C-terminus: Ribulose bisphosphate carboxylase large chain (475 aa).

The propeptide occupies 1-2; sequence MS. At Pro3 the chain carries N-acetylproline. The residue at position 14 (Lys14) is an N6,N6,N6-trimethyllysine. Positions 123 and 173 each coordinate substrate. Lys175 (proton acceptor) is an active-site residue. Residue Lys177 participates in substrate binding. Mg(2+) is bound by residues Lys201, Asp203, and Glu204. At Lys201 the chain carries N6-carboxylysine. His294 serves as the catalytic Proton acceptor. Positions 295, 327, and 379 each coordinate substrate.

It belongs to the RuBisCO large chain family. Type I subfamily. As to quaternary structure, heterohexadecamer of 8 large chains and 8 small chains; disulfide-linked. The disulfide link is formed within the large subunit homodimers. It depends on Mg(2+) as a cofactor. In terms of processing, the disulfide bond which can form in the large chain dimeric partners within the hexadecamer appears to be associated with oxidative stress and protein turnover.

It is found in the plastid. The protein localises to the chloroplast. It catalyses the reaction 2 (2R)-3-phosphoglycerate + 2 H(+) = D-ribulose 1,5-bisphosphate + CO2 + H2O. The enzyme catalyses D-ribulose 1,5-bisphosphate + O2 = 2-phosphoglycolate + (2R)-3-phosphoglycerate + 2 H(+). Its function is as follows. RuBisCO catalyzes two reactions: the carboxylation of D-ribulose 1,5-bisphosphate, the primary event in carbon dioxide fixation, as well as the oxidative fragmentation of the pentose substrate in the photorespiration process. Both reactions occur simultaneously and in competition at the same active site. In Populus tremuloides (Quaking aspen), this protein is Ribulose bisphosphate carboxylase large chain.